The primary structure comprises 270 residues: Glucosamine-6-phosphate deaminase (270 aa).

The active-site Proton acceptor; for enolization step is the Asp72. Asp141 acts as the For ring-opening step in catalysis. The active-site Proton acceptor; for ring-opening step is His143. The active-site For ring-opening step is Glu148.

The protein belongs to the glucosamine/galactosamine-6-phosphate isomerase family. NagB subfamily.

The enzyme catalyses alpha-D-glucosamine 6-phosphate + H2O = beta-D-fructose 6-phosphate + NH4(+). Its pathway is amino-sugar metabolism; N-acetylneuraminate degradation; D-fructose 6-phosphate from N-acetylneuraminate: step 5/5. Its activity is regulated as follows. Allosterically activated by N-acetylglucosamine 6-phosphate (GlcNAc6P). Its function is as follows. Catalyzes the reversible isomerization-deamination of glucosamine 6-phosphate (GlcN6P) to form fructose 6-phosphate (Fru6P) and ammonium ion. The sequence is that of Glucosamine-6-phosphate deaminase from Parabacteroides distasonis (strain ATCC 8503 / DSM 20701 / CIP 104284 / JCM 5825 / NCTC 11152).